The sequence spans 73 residues: Translation initiation factor IF-1 (73 aa).

The region spanning 1-73 (MAKKEGALEL…TRGRIVYRHK (73 aa)) is the S1-like domain.

It belongs to the IF-1 family. As to quaternary structure, component of the 30S ribosomal translation pre-initiation complex which assembles on the 30S ribosome in the order IF-2 and IF-3, IF-1 and N-formylmethionyl-tRNA(fMet); mRNA recruitment can occur at any time during PIC assembly.

The protein resides in the cytoplasm. In terms of biological role, one of the essential components for the initiation of protein synthesis. Stabilizes the binding of IF-2 and IF-3 on the 30S subunit to which N-formylmethionyl-tRNA(fMet) subsequently binds. Helps modulate mRNA selection, yielding the 30S pre-initiation complex (PIC). Upon addition of the 50S ribosomal subunit IF-1, IF-2 and IF-3 are released leaving the mature 70S translation initiation complex. This chain is Translation initiation factor IF-1, found in Cutibacterium acnes (strain DSM 16379 / KPA171202) (Propionibacterium acnes).